A 143-amino-acid chain; its full sequence is Nucleoside diphosphate kinase (143 aa).

Lys-11, Phe-59, Arg-87, Thr-93, Arg-104, and Asn-114 together coordinate ATP. Catalysis depends on His-117, which acts as the Pros-phosphohistidine intermediate.

Belongs to the NDK family. As to quaternary structure, homotetramer. Requires Mg(2+) as cofactor.

Its subcellular location is the cytoplasm. It catalyses the reaction a 2'-deoxyribonucleoside 5'-diphosphate + ATP = a 2'-deoxyribonucleoside 5'-triphosphate + ADP. The catalysed reaction is a ribonucleoside 5'-diphosphate + ATP = a ribonucleoside 5'-triphosphate + ADP. Functionally, major role in the synthesis of nucleoside triphosphates other than ATP. The ATP gamma phosphate is transferred to the NDP beta phosphate via a ping-pong mechanism, using a phosphorylated active-site intermediate. The protein is Nucleoside diphosphate kinase of Klebsiella pneumoniae (strain 342).